The sequence spans 373 residues: Queuine tRNA-ribosyltransferase (373 aa).

The active-site Proton acceptor is the D90. Substrate is bound by residues 90 to 94 (DSGGF), D144, Q193, and G220. The tract at residues 251–257 (GVGTPED) is RNA binding. D270 (nucleophile) is an active-site residue. An RNA binding; important for wobble base 34 recognition region spans residues 275 to 279 (TRNAR). Residues C308, C310, C313, and H339 each coordinate Zn(2+).

The protein belongs to the queuine tRNA-ribosyltransferase family. As to quaternary structure, homodimer. Within each dimer, one monomer is responsible for RNA recognition and catalysis, while the other monomer binds to the replacement base PreQ1. Zn(2+) serves as cofactor.

It catalyses the reaction 7-aminomethyl-7-carbaguanine + guanosine(34) in tRNA = 7-aminomethyl-7-carbaguanosine(34) in tRNA + guanine. It participates in tRNA modification; tRNA-queuosine biosynthesis. Catalyzes the base-exchange of a guanine (G) residue with the queuine precursor 7-aminomethyl-7-deazaguanine (PreQ1) at position 34 (anticodon wobble position) in tRNAs with GU(N) anticodons (tRNA-Asp, -Asn, -His and -Tyr). Catalysis occurs through a double-displacement mechanism. The nucleophile active site attacks the C1' of nucleotide 34 to detach the guanine base from the RNA, forming a covalent enzyme-RNA intermediate. The proton acceptor active site deprotonates the incoming PreQ1, allowing a nucleophilic attack on the C1' of the ribose to form the product. After dissociation, two additional enzymatic reactions on the tRNA convert PreQ1 to queuine (Q), resulting in the hypermodified nucleoside queuosine (7-(((4,5-cis-dihydroxy-2-cyclopenten-1-yl)amino)methyl)-7-deazaguanosine). This Campylobacter jejuni subsp. jejuni serotype O:2 (strain ATCC 700819 / NCTC 11168) protein is Queuine tRNA-ribosyltransferase.